Consider the following 95-residue polypeptide: Protein K6 (95 aa).

The signal sequence occupies residues 1 to 24 (MAPVHVLCCVSVLLATFYLTPTES).

The polypeptide is Protein K6 (K6) (Human herpesvirus 8 type P (isolate GK18) (HHV-8)).